The sequence spans 64 residues: Large ribosomal subunit protein uL29 (64 aa).

This sequence belongs to the universal ribosomal protein uL29 family.

The sequence is that of Large ribosomal subunit protein uL29 from Dichelobacter nodosus (strain VCS1703A).